An 847-amino-acid chain; its full sequence is Beta-galactosidase 1 (847 aa).

Positions 1–32 (MGSKPNAMKNVVAMAAVSALFLLGFLVCSVSG) are cleaved as a signal peptide. The Proton donor role is filled by Glu-190. Glu-259 acts as the Nucleophile in catalysis. An N-linked (GlcNAc...) asparagine glycan is attached at Asn-469. In terms of domain architecture, SUEL-type lectin spans 761-847 (KPLHPKAHLQ…KKLAVEAVCA (87 aa)).

This sequence belongs to the glycosyl hydrolase 35 family. Ubiquitous, at low levels.

It localises to the secreted. Its subcellular location is the extracellular space. It is found in the apoplast. The catalysed reaction is Hydrolysis of terminal non-reducing beta-D-galactose residues in beta-D-galactosides.. The protein is Beta-galactosidase 1 (BGAL1) of Arabidopsis thaliana (Mouse-ear cress).